A 713-amino-acid chain; its full sequence is Polyphosphate kinase (713 aa).

N63 serves as a coordination point for ATP. Mg(2+) is bound by residues R394 and R424. H454 functions as the Phosphohistidine intermediate in the catalytic mechanism. The ATP site is built by Y487, R583, and H611.

Belongs to the polyphosphate kinase 1 (PPK1) family. Mg(2+) serves as cofactor. In terms of processing, an intermediate of this reaction is the autophosphorylated ppk in which a phosphate is covalently linked to a histidine residue through a N-P bond.

It carries out the reaction [phosphate](n) + ATP = [phosphate](n+1) + ADP. Catalyzes the reversible transfer of the terminal phosphate of ATP to form a long-chain polyphosphate (polyP). The protein is Polyphosphate kinase of Prosthecochloris aestuarii (strain DSM 271 / SK 413).